Here is a 476-residue protein sequence, read N- to C-terminus: Aspartyl/glutamyl-tRNA(Asn/Gln) amidotransferase subunit B (476 aa).

It belongs to the GatB/GatE family. GatB subfamily. Heterotrimer of A, B and C subunits.

It carries out the reaction L-glutamyl-tRNA(Gln) + L-glutamine + ATP + H2O = L-glutaminyl-tRNA(Gln) + L-glutamate + ADP + phosphate + H(+). It catalyses the reaction L-aspartyl-tRNA(Asn) + L-glutamine + ATP + H2O = L-asparaginyl-tRNA(Asn) + L-glutamate + ADP + phosphate + 2 H(+). Allows the formation of correctly charged Asn-tRNA(Asn) or Gln-tRNA(Gln) through the transamidation of misacylated Asp-tRNA(Asn) or Glu-tRNA(Gln) in organisms which lack either or both of asparaginyl-tRNA or glutaminyl-tRNA synthetases. The reaction takes place in the presence of glutamine and ATP through an activated phospho-Asp-tRNA(Asn) or phospho-Glu-tRNA(Gln). This Neisseria gonorrhoeae (strain ATCC 700825 / FA 1090) protein is Aspartyl/glutamyl-tRNA(Asn/Gln) amidotransferase subunit B.